Consider the following 245-residue polypeptide: tRNA pseudouridine synthase A 2 (245 aa).

The Nucleophile role is filled by Asp53. Tyr111 is a substrate binding site.

The protein belongs to the tRNA pseudouridine synthase TruA family. Homodimer.

It carries out the reaction uridine(38/39/40) in tRNA = pseudouridine(38/39/40) in tRNA. Formation of pseudouridine at positions 38, 39 and 40 in the anticodon stem and loop of transfer RNAs. The protein is tRNA pseudouridine synthase A 2 of Bacillus thuringiensis subsp. konkukian (strain 97-27).